Consider the following 121-residue polypeptide: MTLRAVGVRLLGGLLLFALLAAGAAPLGWDLPESRSRASKIRVHPRGNLWATGHFMGKKSLEPPSPSLLGTAPHTSLRDQTPQLSHHLLRVLLQKQALGMSLSVPAPNTQHRRLLVQTLQK.

The signal sequence occupies residues 1–24 (MTLRAVGVRLLGGLLLFALLAAGA). A Methionine amide modification is found at methionine 56. Positions 60-121 (SLEPPSPSLL…RRLLVQTLQK (62 aa)) are excised as a propeptide. The tract at residues 61 to 80 (LEPPSPSLLGTAPHTSLRDQ) is disordered.

The protein belongs to the bombesin/neuromedin-B/ranatensin family.

The protein resides in the secreted. It localises to the cell projection. The protein localises to the neuron projection. Its function is as follows. Stimulates smooth muscle contraction. Induces sighing by acting directly on the pre-Botzinger complex, a cluster of several thousand neurons in the ventrolateral medulla responsible for inspiration during respiratory activity. Contributes to the induction of sneezing following exposure to chemical irritants or allergens which causes release of NMB by nasal sensory neurons and activation of NMBR-expressing neurons in the sneeze-evoking region of the brainstem. These in turn activate neurons of the caudal ventral respiratory group, giving rise to the sneezing response. Contributes to induction of acute itch, possibly through activation of the NMBR receptor on dorsal root ganglion neurons. Increases expression of NMBR and steroidogenic mediators STAR, CYP11A1 and HSD3B1 in Leydig cells, induces secretion of testosterone by Leydig cells and also promotes Leydig cell proliferation. Plays a role in the innate immune response to influenza A virus infection by enhancing interferon alpha expression and reducing expression of IL6. Plays a role in CSF1-induced proliferation of osteoclast precursors by contributing to the positive regulation of the expression of the CSF1 receptor CSF1R. The chain is Neuromedin-B (NMB) from Bos taurus (Bovine).